We begin with the raw amino-acid sequence, 195 residues long: UPF0167 protein CbrC (195 aa).

The protein belongs to the UPF0167 family.

This is UPF0167 protein CbrC (cbrC) from Escherichia coli (strain K12).